Consider the following 354-residue polypeptide: Chorismate synthase (354 aa).

Residue R48 participates in NADP(+) binding. FMN contacts are provided by residues 125–127, G277, 292–296, and R318; these read RAS and KPIPS.

This sequence belongs to the chorismate synthase family. Homotetramer. FMNH2 is required as a cofactor.

It carries out the reaction 5-O-(1-carboxyvinyl)-3-phosphoshikimate = chorismate + phosphate. The protein operates within metabolic intermediate biosynthesis; chorismate biosynthesis; chorismate from D-erythrose 4-phosphate and phosphoenolpyruvate: step 7/7. Its function is as follows. Catalyzes the anti-1,4-elimination of the C-3 phosphate and the C-6 proR hydrogen from 5-enolpyruvylshikimate-3-phosphate (EPSP) to yield chorismate, which is the branch point compound that serves as the starting substrate for the three terminal pathways of aromatic amino acid biosynthesis. This reaction introduces a second double bond into the aromatic ring system. In Nitratidesulfovibrio vulgaris (strain DP4) (Desulfovibrio vulgaris), this protein is Chorismate synthase.